A 1017-amino-acid chain; its full sequence is Protein HIRA (1017 aa).

2 WD repeats span residues 11-53 (HNGK…QEDD) and 68-107 (NHLACVNCVRWSNSGMYLASGGDDKLIMVWKRATYIGPST). Ser111 is modified (phosphoserine). WD repeat units follow at residues 129-168 (NHSGDVMDVAWSPHDAWLASCSVDNTVVIWNAVKFPEILA), 172-211 (GHSGLVKGLTWDPVGKYIASQADDRSLKVWRTLDWQLETS), 220-263 (GGTT…TNMD), 266-322 (GHRK…PLVV), and 326-367 (LFDK…DPLS). The interval 421–479 (REMGSATSVAGVVNGESLEDIRKNLLKKQVETRTADGRRRITPLCIAQLDTGDFSTAFF) is interaction with ASF1A. The segment at 421-729 (REMGSATSVA…RLKCNREGKE (309 aa)) is interaction with CCNA1. The interval 439 to 475 (EDIRKNLLKKQVETRTADGRRRITPLCIAQLDTGDFS) is required for repression of histone gene transcription. The span at 494–509 (SSHSSPQLLPLDSSTP) shows a compositional bias: low complexity. Residues 494–555 (SSHSSPQLLP…AALSPSVLTT (62 aa)) are disordered. Residues 536–555 (KDSMNATSTPAALSPSVLTT) show a composition bias toward polar residues. Ser549 carries the phosphoserine modification. At Thr555 the chain carries Phosphothreonine; by CDK2. Ser557 is subject to Phosphoserine. Disordered regions lie at residues 570-589 (TERSKATPGAPALTSMTPTA) and 604-625 (PRDLLESSSDSDEKVPLAKASS). Thr576 is subject to Phosphothreonine. Phosphoserine is present on Ser584. Thr586 is modified (phosphothreonine). The tract at residues 593–826 (LKEQNLVKEL…LAGSDMTVSQ (234 aa)) is interaction with histone H2B. Interaction with PAX3 stretches follow at residues 594 to 739 (KEQN…SRIL) and 740 to 828 (TAAG…SQIL). A compositionally biased stretch (basic and acidic residues) spans 604–619 (PRDLLESSSDSDEKVP). Phosphoserine occurs at positions 610, 611, 612, 614, 661, 675, and 687. Residues 738–1017 (ILTAAGSCDV…QEQLDILRDK (280 aa)) are interaction with histone H4.

This sequence belongs to the WD repeat HIR1 family. In terms of assembly, interacts with histone H3-3B, PAX3 and PAX7. Interacts with histone H3.Y. Interacts with CCNA1, HIRIP3, NFU1/HIRIP5 and histone H2B. Part of a complex which includes ASF1A, CABIN1, histone H3.3, histone H4 and UBN1. Post-translationally, sumoylated. Phosphorylated by CDK2/CCNA1 and CDK2/CCNE1 on Thr-555 in vitro. Also phosphorylated on Thr-555 and Ser-687 in vivo. Expressed at high levels in kidney, pancreas and skeletal muscle and at lower levels in brain, heart, liver, lung, and placenta.

Its subcellular location is the nucleus. It localises to the PML body. Cooperates with ASF1A to promote replication-independent chromatin assembly. Required for the periodic repression of histone gene transcription during the cell cycle. Required for the formation of senescence-associated heterochromatin foci (SAHF) and efficient senescence-associated cell cycle exit. This Homo sapiens (Human) protein is Protein HIRA (HIRA).